A 489-amino-acid chain; its full sequence is Cytochrome P450 2C41 (489 aa).

C434 serves as a coordination point for heme.

Belongs to the cytochrome P450 family. Heme serves as cofactor.

Its subcellular location is the endoplasmic reticulum membrane. The protein localises to the microsome membrane. It carries out the reaction an organic molecule + reduced [NADPH--hemoprotein reductase] + O2 = an alcohol + oxidized [NADPH--hemoprotein reductase] + H2O + H(+). In terms of biological role, cytochromes P450 are a group of heme-thiolate monooxygenases. In liver microsomes, this enzyme is involved in an NADPH-dependent electron transport pathway. It oxidizes a variety of structurally unrelated compounds, including steroids, fatty acids, and xenobiotics. This is Cytochrome P450 2C41 (CYP2C41) from Canis lupus familiaris (Dog).